Reading from the N-terminus, the 650-residue chain is DNA topoisomerase 3 (650 aa).

Positions 1–134 constitute a Toprim domain; the sequence is MRLFIAEKPS…KLNQIQRCLI (134 aa). Positions 7, 103, and 105 each coordinate Mg(2+). A Topo IA-type catalytic domain is found at 155 to 617; the sequence is FIPLATSALA…TLTNFLPELM (463 aa). Residues 194 to 199 are interaction with DNA; it reads SVGRVQ. Tyr-342 functions as the O-(5'-phospho-DNA)-tyrosine intermediate in the catalytic mechanism.

This sequence belongs to the type IA topoisomerase family. The cofactor is Mg(2+).

It carries out the reaction ATP-independent breakage of single-stranded DNA, followed by passage and rejoining.. Its function is as follows. Releases the supercoiling and torsional tension of DNA, which is introduced during the DNA replication and transcription, by transiently cleaving and rejoining one strand of the DNA duplex. Introduces a single-strand break via transesterification at a target site in duplex DNA. The scissile phosphodiester is attacked by the catalytic tyrosine of the enzyme, resulting in the formation of a DNA-(5'-phosphotyrosyl)-enzyme intermediate and the expulsion of a 3'-OH DNA strand. The free DNA strand then undergoes passage around the unbroken strand, thus removing DNA supercoils. Finally, in the religation step, the DNA 3'-OH attacks the covalent intermediate to expel the active-site tyrosine and restore the DNA phosphodiester backbone. The polypeptide is DNA topoisomerase 3 (Pasteurella multocida (strain Pm70)).